The following is a 303-amino-acid chain: Acetylglutamate kinase (303 aa).

Substrate contacts are provided by residues 69–70 (GG), Arg-91, and Asn-201.

It belongs to the acetylglutamate kinase family. ArgB subfamily.

Its subcellular location is the cytoplasm. The enzyme catalyses N-acetyl-L-glutamate + ATP = N-acetyl-L-glutamyl 5-phosphate + ADP. The protein operates within amino-acid biosynthesis; L-arginine biosynthesis; N(2)-acetyl-L-ornithine from L-glutamate: step 2/4. In terms of biological role, catalyzes the ATP-dependent phosphorylation of N-acetyl-L-glutamate. This Novosphingobium aromaticivorans (strain ATCC 700278 / DSM 12444 / CCUG 56034 / CIP 105152 / NBRC 16084 / F199) protein is Acetylglutamate kinase.